The sequence spans 691 residues: Elongation factor G (691 aa).

The region spanning 12 to 286 (KKLRNIGIMA…GVLEYLPSPL (275 aa)) is the tr-type G domain. GTP is bound by residues 21 to 28 (AHIDAGKT), 85 to 89 (DTPGH), and 139 to 142 (NKMD).

The protein belongs to the TRAFAC class translation factor GTPase superfamily. Classic translation factor GTPase family. EF-G/EF-2 subfamily.

Its subcellular location is the cytoplasm. In terms of biological role, catalyzes the GTP-dependent ribosomal translocation step during translation elongation. During this step, the ribosome changes from the pre-translocational (PRE) to the post-translocational (POST) state as the newly formed A-site-bound peptidyl-tRNA and P-site-bound deacylated tRNA move to the P and E sites, respectively. Catalyzes the coordinated movement of the two tRNA molecules, the mRNA and conformational changes in the ribosome. In Thermosipho melanesiensis (strain DSM 12029 / CIP 104789 / BI429), this protein is Elongation factor G.